A 226-amino-acid chain; its full sequence is MGGKLSKKKKGYNVNDEKAKDKDKKAEGAGTEEEGTPKESEPQAAADATEVKESTEEKPKDAADGEAKAEEKEADKAAAAKEEAPKAEPEKSEGAAEEQPEPAPAPEQEAAAPGPAAGGEAPKAGEASAESTGAADGAAPEEGEAKKTEAPAAAGPEAKSDAAPAASDSKPSSAEPAPSSKETPAASEAPSSAAKAPAPAAPAAAEPQAEAPAAAASSEQSVAVKE.

Residues 1-11 show a composition bias toward basic residues; that stretch reads MGGKLSKKKKG. Residues 1–226 are disordered; that stretch reads MGGKLSKKKK…SSEQSVAVKE (226 aa). The N-myristoyl glycine moiety is linked to residue G2. Over residues 15-27 the composition is skewed to basic and acidic residues; that stretch reads NDEKAKDKDKKAE. K25 participates in a covalent cross-link: Glycyl lysine isopeptide (Lys-Gly) (interchain with G-Cter in SUMO2). Residues T31 and T36 each carry the phosphothreonine modification. Residue S40 is modified to Phosphoserine. Positions 49-94 are enriched in basic and acidic residues; the sequence is TEVKESTEEKPKDAADGEAKAEEKEADKAAAAKEEAPKAEPEKSEG. K86 participates in a covalent cross-link: Glycyl lysine isopeptide (Lys-Gly) (interchain with G-Cter in SUMO2). Residues S92, S128, and S131 each carry the phosphoserine modification. 2 stretches are compositionally biased toward low complexity: residues 106–140 and 150–226; these read PEQE…GAAP and APAA…AVKE. K159 participates in a covalent cross-link: Glycyl lysine isopeptide (Lys-Gly) (interchain with G-Cter in SUMO2). Residues S160, S167, S169, S173, S192, and S218 each carry the phosphoserine modification.

The protein belongs to the BASP1 family.

It localises to the cell membrane. Its subcellular location is the cell projection. It is found in the growth cone. The chain is Brain acid soluble protein 1 (Basp1) from Mus musculus (Mouse).